The following is a 1175-amino-acid chain: 1-phosphatidylinositol 4,5-bisphosphate phosphodiesterase beta-4 (1175 aa).

Ala-2 carries the post-translational modification N-acetylalanine. Residues 313 to 463 (QEMDHPLAHY…LKRKILIKNK (151 aa)) enclose the PI-PLC X-box domain. Catalysis depends on residues His-328 and His-375. The tract at residues 482–511 (EAGESASPANILEDDNEEEIESADQEEEAH) is disordered. The segment covering 493–508 (LEDDNEEEIESADQEE) has biased composition (acidic residues). Residues 565–681 (LSTMINYAQP…GYLLKPDFMR (117 aa)) form the PI-PLC Y-box domain. In terms of domain architecture, C2 spans 684–809 (DRTFDPFSET…SLRNEGNKPL (126 aa)). Disordered stretches follow at residues 863 to 895 (ADVP…ELRP) and 1082 to 1110 (KISM…VREL). 2 stretches are compositionally biased toward polar residues: residues 881–895 (AKAN…ELRP) and 1085–1094 (MENSKAISQD). The residue at position 886 (Thr-886) is a Phosphothreonine. The span at 1095 to 1109 (KSIKNKAERERRVRE) shows a compositional bias: basic and acidic residues.

Requires Ca(2+) as cofactor. As to expression, preferentially expressed in the retina.

It is found in the cell membrane. It carries out the reaction a 1,2-diacyl-sn-glycero-3-phospho-(1D-myo-inositol-4,5-bisphosphate) + H2O = 1D-myo-inositol 1,4,5-trisphosphate + a 1,2-diacyl-sn-glycerol + H(+). It catalyses the reaction a 1,2-diacyl-sn-glycero-3-phospho-(1D-myo-inositol) + H2O = 1D-myo-inositol 1-phosphate + a 1,2-diacyl-sn-glycerol + H(+). In terms of biological role, activated phosphatidylinositol-specific phospholipase C enzymes catalyze the production of the second messenger molecules diacylglycerol (DAG) and inositol 1,4,5-trisphosphate (IP3) involved in G-protein coupled receptor signaling pathways. PLCB4 is a direct effector of the endothelin receptor signaling pathway that plays an essential role in lower jaw and middle ear structures development. In Homo sapiens (Human), this protein is 1-phosphatidylinositol 4,5-bisphosphate phosphodiesterase beta-4.